Reading from the N-terminus, the 339-residue chain is Peroxidase 29 (339 aa).

The N-terminal stretch at 1–28 is a signal peptide; it reads MKPKSKVAESTAASCFLVMSLLCSCIIG. Intrachain disulfides connect Cys47/Cys127, Cys80/Cys85, Cys133/Cys335, and Cys213/Cys242. His78 serves as the catalytic Proton acceptor. Ca(2+) contacts are provided by Asp79, Val82, Gly84, Asp86, and Ser88. Residue Pro176 participates in substrate binding. Residue His206 coordinates heme b. Thr207 contributes to the Ca(2+) binding site. The N-linked (GlcNAc...) asparagine glycan is linked to Asn224. Asp260, Thr262, and Asp267 together coordinate Ca(2+).

The protein belongs to the peroxidase family. Classical plant (class III) peroxidase subfamily. Requires heme b as cofactor. The cofactor is Ca(2+).

The protein localises to the secreted. The enzyme catalyses 2 a phenolic donor + H2O2 = 2 a phenolic radical donor + 2 H2O. In terms of biological role, removal of H(2)O(2), oxidation of toxic reductants, biosynthesis and degradation of lignin, suberization, auxin catabolism, response to environmental stresses such as wounding, pathogen attack and oxidative stress. These functions might be dependent on each isozyme/isoform in each plant tissue. This chain is Peroxidase 29 (PER29), found in Arabidopsis thaliana (Mouse-ear cress).